Consider the following 304-residue polypeptide: Pseudouridine-5'-phosphate glycosidase (304 aa).

E25 serves as the catalytic Proton donor. Substrate is bound by residues K86 and V106. D138 is a binding site for Mn(2+). Position 140 to 142 (140 to 142 (SAD)) interacts with substrate. Catalysis depends on K159, which acts as the Nucleophile.

The protein belongs to the pseudouridine-5'-phosphate glycosidase family. In terms of assembly, homotrimer. Mn(2+) serves as cofactor.

The enzyme catalyses D-ribose 5-phosphate + uracil = psi-UMP + H2O. Catalyzes the reversible cleavage of pseudouridine 5'-phosphate (PsiMP) to ribose 5-phosphate and uracil. Functions biologically in the cleavage direction, as part of a pseudouridine degradation pathway. In Lysinibacillus sphaericus (strain C3-41), this protein is Pseudouridine-5'-phosphate glycosidase.